Reading from the N-terminus, the 269-residue chain is Cytochrome c oxidase subunit 3 (269 aa).

Residues 1–22 (MTHLERSRHQQHPFHMVMPSPW) lie on the Mitochondrial matrix side of the membrane. Residues 23–41 (PIVVSFALLSLALSTALTM) traverse the membrane as a helical segment. Residues 42–48 (HGYIGNM) lie on the Mitochondrial intermembrane side of the membrane. The helical transmembrane segment at 49–73 (NMVYLALFVLLTSSILWFRDIVAEA) threads the bilayer. At 74–80 (TYLGDHT) the chain is on the mitochondrial matrix side. A helical membrane pass occupies residues 81–114 (MAVRKGINLGFLMFVLSEVLIFAGLFWAYFHSAM). Topologically, residues 115–137 (SPDVTLGACWPPVGIEAVQPTEL) are mitochondrial intermembrane. A helical transmembrane segment spans residues 138–161 (PLLNTIILLSSGATVTYSHHALIA). The Mitochondrial matrix segment spans residues 162–164 (GNR). A helical membrane pass occupies residues 165–188 (NKALSGLLITFWLIVIFVTCQYIE). The Mitochondrial intermembrane portion of the chain corresponds to 189-201 (YTNAAFTISDGVY). A helical membrane pass occupies residues 202–230 (GSVFYAGTGLHFLHMVMLAAMLGVNYWRM). The Mitochondrial matrix portion of the chain corresponds to 231-248 (RNYHLTAGHHVGYETTII). A helical transmembrane segment spans residues 249–265 (YTHVLDVIWLFLYVVFY). Residues 266–269 (WWGV) lie on the Mitochondrial intermembrane side of the membrane.

Belongs to the cytochrome c oxidase subunit 3 family. In terms of assembly, component of the cytochrome c oxidase (complex IV, CIV), a multisubunit enzyme composed of 12 subunits. The complex is composed of a catalytic core of 3 subunits COX1, COX2 and COX3, encoded in the mitochondrial DNA, and 9 supernumerary subunits COX4, COX5A (or COX5B), COX6, COX7, COX8, COX9, COX12, COX13 and COX26, which are encoded in the nuclear genome. The complex exists as a monomer or a dimer and forms supercomplexes (SCs) in the inner mitochondrial membrane with a dimer of ubiquinol-cytochrome c oxidoreductase (cytochrome b-c1 complex, complex III, CIII), resulting in 2 different assemblies (supercomplexes III(2)IV and III(2)IV(2)). In terms of processing, the N-terminus is blocked.

Its subcellular location is the mitochondrion inner membrane. It carries out the reaction 4 Fe(II)-[cytochrome c] + O2 + 8 H(+)(in) = 4 Fe(III)-[cytochrome c] + 2 H2O + 4 H(+)(out). In terms of biological role, component of the cytochrome c oxidase, the last enzyme in the mitochondrial electron transport chain which drives oxidative phosphorylation. The respiratory chain contains 3 multisubunit complexes succinate dehydrogenase (complex II, CII), ubiquinol-cytochrome c oxidoreductase (cytochrome b-c1 complex, complex III, CIII) and cytochrome c oxidase (complex IV, CIV), that cooperate to transfer electrons derived from NADH and succinate to molecular oxygen, creating an electrochemical gradient over the inner membrane that drives transmembrane transport and the ATP synthase. Cytochrome c oxidase is the component of the respiratory chain that catalyzes the reduction of oxygen to water. Electrons originating from reduced cytochrome c in the intermembrane space (IMS) are transferred via the dinuclear copper A center (CU(A)) of COX2 and heme A of COX1 to the active site in COX1, a binuclear center (BNC) formed by heme A3 and copper B (CU(B)). The BNC reduces molecular oxygen to 2 water molecules using 4 electrons from cytochrome c in the IMS and 4 protons from the mitochondrial matrix. COX3 is a catalytic core subunit. In Saccharomyces cerevisiae (strain ATCC 204508 / S288c) (Baker's yeast), this protein is Cytochrome c oxidase subunit 3 (COX3).